Reading from the N-terminus, the 431-residue chain is uncharacterized protein (431 aa).

Helical transmembrane passes span 228 to 248 (GLLSIPLTSSIIIYGFIHYLS), 279 to 299 (IGLPKIILYSNLATFCYNFTF), 349 to 369 (ILWPFVGKCTGGLLLNAFLWI), and 388 to 408 (MIFNIIGCGTAAIGWSSLKLY).

The protein resides in the membrane. This is an uncharacterized protein from Saccharomyces cerevisiae (strain ATCC 204508 / S288c) (Baker's yeast).